The chain runs to 195 residues: Imidazoleglycerol-phosphate dehydratase (195 aa).

This sequence belongs to the imidazoleglycerol-phosphate dehydratase family.

It is found in the cytoplasm. The catalysed reaction is D-erythro-1-(imidazol-4-yl)glycerol 3-phosphate = 3-(imidazol-4-yl)-2-oxopropyl phosphate + H2O. The protein operates within amino-acid biosynthesis; L-histidine biosynthesis; L-histidine from 5-phospho-alpha-D-ribose 1-diphosphate: step 6/9. In Methanosphaerula palustris (strain ATCC BAA-1556 / DSM 19958 / E1-9c), this protein is Imidazoleglycerol-phosphate dehydratase.